The primary structure comprises 183 residues: ATP-dependent protease subunit HslV (183 aa).

Threonine 2 is an active-site residue. Glycine 157, cysteine 160, and threonine 163 together coordinate Na(+).

The protein belongs to the peptidase T1B family. HslV subfamily. A double ring-shaped homohexamer of HslV is capped on each side by a ring-shaped HslU homohexamer. The assembly of the HslU/HslV complex is dependent on binding of ATP.

Its subcellular location is the cytoplasm. The enzyme catalyses ATP-dependent cleavage of peptide bonds with broad specificity.. With respect to regulation, allosterically activated by HslU binding. Its function is as follows. Protease subunit of a proteasome-like degradation complex believed to be a general protein degrading machinery. The polypeptide is ATP-dependent protease subunit HslV (Vibrio parahaemolyticus serotype O3:K6 (strain RIMD 2210633)).